We begin with the raw amino-acid sequence, 190 residues long: NADH-ubiquinone oxidoreductase chain 5 (190 aa).

The next 6 helical transmembrane spans lie at 1-21, 68-88, 94-114, 118-138, 146-166, and 167-187; these read MVIS…CLIV, INIL…FVGL, NVTF…SILF, FIVF…FSLL, NVFL…CSNS, and LFLL…LIKM.

The protein belongs to the complex I subunit 5 family.

It is found in the mitochondrion inner membrane. It catalyses the reaction a ubiquinone + NADH + 5 H(+)(in) = a ubiquinol + NAD(+) + 4 H(+)(out). Functionally, core subunit of the mitochondrial membrane respiratory chain NADH dehydrogenase (Complex I) that is believed to belong to the minimal assembly required for catalysis. Complex I functions in the transfer of electrons from NADH to the respiratory chain. The immediate electron acceptor for the enzyme is believed to be ubiquinone. The protein is NADH-ubiquinone oxidoreductase chain 5 (ND5) of Arbacia lixula (Black urchin).